A 78-amino-acid polypeptide reads, in one-letter code: Defensin-like protein 90 (78 aa).

Residues 1–25 (MTTKMFSYVLLHSLMMFAIILSSMG) form the signal peptide. 4 disulfide bridges follow: cysteine 33–cysteine 70, cysteine 38–cysteine 59, cysteine 44–cysteine 68, and cysteine 48–cysteine 69.

This sequence belongs to the DEFL family.

It is found in the secreted. The chain is Defensin-like protein 90 from Arabidopsis thaliana (Mouse-ear cress).